The following is a 196-amino-acid chain: GTP cyclohydrolase-2 (196 aa).

49 to 53 (RIHSE) is a GTP binding site. The Zn(2+) site is built by C54, C65, and C67. Residues Q70, 92–94 (EGR), and T114 each bind GTP. Residue D126 is the Proton acceptor of the active site. The active-site Nucleophile is R128. Residues T149 and K154 each coordinate GTP.

The protein belongs to the GTP cyclohydrolase II family. As to quaternary structure, homodimer. Zn(2+) is required as a cofactor.

The catalysed reaction is GTP + 4 H2O = 2,5-diamino-6-hydroxy-4-(5-phosphoribosylamino)-pyrimidine + formate + 2 phosphate + 3 H(+). Its pathway is cofactor biosynthesis; riboflavin biosynthesis; 5-amino-6-(D-ribitylamino)uracil from GTP: step 1/4. In terms of biological role, catalyzes the conversion of GTP to 2,5-diamino-6-ribosylamino-4(3H)-pyrimidinone 5'-phosphate (DARP), formate and pyrophosphate. This is GTP cyclohydrolase-2 from Hamiltonella defensa subsp. Acyrthosiphon pisum (strain 5AT).